A 340-amino-acid chain; its full sequence is Putative RRN3-like protein RRN3P2 (340 aa).

This sequence belongs to the RRN3 family.

In Homo sapiens (Human), this protein is Putative RRN3-like protein RRN3P2 (RRN3P2).